The primary structure comprises 545 residues: Resolvase homolog YokA (545 aa).

One can recognise a Resolvase/invertase-type recombinase catalytic domain in the interval 14 to 165 (NILGYLRRSR…GAKYTYAAQG (152 aa)). The stretch at 19–46 (LRRSRQDMEREKRTGEDTLTEQKELMNK) forms a coiled coil. The active-site O-(5'-phospho-DNA)-serine intermediate is the Ser22. A DNA-binding region (recombinase) is located at residues 173 to 303 (PYGYQLNKKT…VKIANKVPLL (131 aa)). Residues 402-475 (NMKTKKQMSE…QDTQSEIDSN (74 aa)) are a coiled coil.

It in the N-terminal section; belongs to the site-specific recombinase resolvase family.

This Bacillus subtilis (strain 168) protein is Resolvase homolog YokA (yokA).